The following is a 366-amino-acid chain: Putative F-box protein At3g13624 (366 aa).

The F-box domain maps to 1-51 (MTTISDLPEDVVEEILPRVPLTSLSAVRSICKTWNTLSKNRVLCKAAVKKQ).

The sequence is that of Putative F-box protein At3g13624 from Arabidopsis thaliana (Mouse-ear cress).